We begin with the raw amino-acid sequence, 463 residues long: Glutamate--tRNA ligase 1 (463 aa).

Positions 10-20 match the 'HIGH' region motif; the sequence is PSPTGYLHIGG. A 'KMSKS' region motif is present at residues 238–242; it reads KLSKR. Lysine 241 lines the ATP pocket.

It belongs to the class-I aminoacyl-tRNA synthetase family. Glutamate--tRNA ligase type 1 subfamily. Monomer.

The protein localises to the cytoplasm. The catalysed reaction is tRNA(Glu) + L-glutamate + ATP = L-glutamyl-tRNA(Glu) + AMP + diphosphate. In terms of biological role, catalyzes the attachment of glutamate to tRNA(Glu) in a two-step reaction: glutamate is first activated by ATP to form Glu-AMP and then transferred to the acceptor end of tRNA(Glu). This Helicobacter pylori (strain HPAG1) protein is Glutamate--tRNA ligase 1.